The following is a 549-amino-acid chain: Pyrophosphate--fructose 6-phosphate 1-phosphotransferase (549 aa).

Residue Gly78 participates in diphosphate binding. Residue Asp172 participates in Mg(2+) binding. Substrate is bound by residues 200–202 (TID), 239–240 (KY), 247–249 (MGR), Glu308, and 421–424 (YEGR). Asp202 acts as the Proton acceptor in catalysis.

It belongs to the phosphofructokinase type A (PFKA) family. PPi-dependent PFK group II subfamily. Clade 'Long' sub-subfamily. Homodimer. Requires Mg(2+) as cofactor.

It localises to the cytoplasm. It catalyses the reaction beta-D-fructose 6-phosphate + diphosphate = beta-D-fructose 1,6-bisphosphate + phosphate + H(+). The protein operates within carbohydrate degradation; glycolysis; D-glyceraldehyde 3-phosphate and glycerone phosphate from D-glucose: step 3/4. Non-allosteric. Catalyzes the phosphorylation of D-fructose 6-phosphate, the first committing step of glycolysis. Uses inorganic phosphate (PPi) as phosphoryl donor instead of ATP like common ATP-dependent phosphofructokinases (ATP-PFKs), which renders the reaction reversible, and can thus function both in glycolysis and gluconeogenesis. Consistently, PPi-PFK can replace the enzymes of both the forward (ATP-PFK) and reverse (fructose-bisphosphatase (FBPase)) reactions. The chain is Pyrophosphate--fructose 6-phosphate 1-phosphotransferase from Porphyromonas gingivalis (Bacteroides gingivalis).